A 366-amino-acid polypeptide reads, in one-letter code: Quinolinate synthase (366 aa).

H44 and S61 together coordinate iminosuccinate. A [4Fe-4S] cluster-binding site is contributed by C108. Iminosuccinate contacts are provided by residues 139–141 and S160; that span reads YIN. C228 provides a ligand contact to [4Fe-4S] cluster. Residues 254-256 and T271 contribute to the iminosuccinate site; that span reads HPE. [4Fe-4S] cluster is bound at residue C318.

The protein belongs to the quinolinate synthase family. Type 3 subfamily. It depends on [4Fe-4S] cluster as a cofactor.

Its subcellular location is the cytoplasm. It catalyses the reaction iminosuccinate + dihydroxyacetone phosphate = quinolinate + phosphate + 2 H2O + H(+). It participates in cofactor biosynthesis; NAD(+) biosynthesis; quinolinate from iminoaspartate: step 1/1. Catalyzes the condensation of iminoaspartate with dihydroxyacetone phosphate to form quinolinate. The polypeptide is Quinolinate synthase (Listeria monocytogenes serovar 1/2a (strain ATCC BAA-679 / EGD-e)).